Here is a 184-residue protein sequence, read N- to C-terminus: Photosystem I assembly protein Ycf4 (184 aa).

Helical transmembrane passes span 21-43 (NFFW…ISSY) and 58-78 (LFVP…FISS).

This sequence belongs to the Ycf4 family.

Its subcellular location is the plastid. It localises to the chloroplast thylakoid membrane. In terms of biological role, seems to be required for the assembly of the photosystem I complex. This Pinus thunbergii (Japanese black pine) protein is Photosystem I assembly protein Ycf4.